Consider the following 297-residue polypeptide: UBX domain-containing protein 1 (297 aa).

Residue Ala2 is modified to N-acetylalanine. The region spanning 2 to 42 (AELTALESLIEMGFPKGRAEKALALTGNQGIEAAMDWLMEH) is the UBA domain. Positions 40-210 (MEHEDDPDVD…PSREPPTKRE (171 aa)) are disordered. The interaction with BRCA1 stretch occupies residues 43 to 297 (EDDPDVDEPL…VLIVAKKCPG (255 aa)). 2 stretches are compositionally biased toward basic and acidic residues: residues 86-122 (LTEEERQEQTKRMLELVAQKQREREEREEREALERER) and 137-177 (RLQE…ERAK). Residues 86-176 (LTEEERQEQT…KIERDKAERA (91 aa)) are a coiled coil. Residues 187 to 199 (PSPPATEPGPVPS) are compositionally biased toward pro residues. Ser199 carries the phosphoserine modification. The residue at position 200 (Ser200) is a Phosphoserine; by MAPK12. Thr207 and Thr229 each carry phosphothreonine. One can recognise a UBX domain in the interval 209 to 291 (REYDQCRIQV…GLVPSAVLIV (83 aa)). The residue at position 270 (Ser270) is a Phosphoserine.

In terms of assembly, component of a complex required to couple retrotranslocation, ubiquitination and deglycosylation composed of NGLY1, SAKS1, AMFR, VCP and RAD23B. Interacts with HOMER2. Interacts directly with VCP. Interacts with BRCA1 and BARD1; interaction takes place when BRCA1 is not autoubiquitinated bur is strongly enhanced in the presence of autoubiquitinated BRCA1.

The protein localises to the cytoplasm. Its function is as follows. Ubiquitin-binding protein that interacts with the BRCA1-BARD1 heterodimer, and regulates its activity. Specifically binds 'Lys-6'-linked polyubiquitin chains. Interaction with autoubiquitinated BRCA1, leads to inhibit the E3 ubiquitin-protein ligase activity of the BRCA1-BARD1 heterodimer. Component of a complex required to couple deglycosylation and proteasome-mediated degradation of misfolded proteins in the endoplasmic reticulum that are retrotranslocated in the cytosol. The protein is UBX domain-containing protein 1 (UBXN1) of Bos taurus (Bovine).